The sequence spans 641 residues: Protein BCAP (641 aa).

4 coiled-coil regions span residues 83-144, 191-270, 299-375, and 487-599; these read HWPV…KQND, EKDN…RKLE, QKQK…EREQ, and FKLE…TLNA.

It belongs to the ODF2 family.

The protein localises to the cytoplasm. It is found in the cytoskeleton. It localises to the microtubule organizing center. Its subcellular location is the centrosome. The protein resides in the centriole. The protein localises to the centriolar satellite. It is found in the cilium basal body. In terms of biological role, acts as a suppressor of ciliogenesis, specifically, the initiation of ciliogenesis. This chain is Protein BCAP (odf2l), found in Xenopus laevis (African clawed frog).